The following is a 313-amino-acid chain: HPr kinase/phosphorylase (313 aa).

Catalysis depends on residues His140 and Lys161. 155–162 (GNSGAGKS) lines the ATP pocket. Ser162 lines the Mg(2+) pocket. Residue Asp179 is the Proton acceptor; for phosphorylation activity. Proton donor; for dephosphorylation activity of the active site. Positions 203-212 (IEVRGLGILN) are important for the catalytic mechanism of both phosphorylation and dephosphorylation. Glu204 serves as a coordination point for Mg(2+). Arg246 is an active-site residue. An important for the catalytic mechanism of dephosphorylation region spans residues 267-272 (PVAAGR).

It belongs to the HPrK/P family. In terms of assembly, homohexamer. The cofactor is Mg(2+).

The catalysed reaction is [HPr protein]-L-serine + ATP = [HPr protein]-O-phospho-L-serine + ADP + H(+). The enzyme catalyses [HPr protein]-O-phospho-L-serine + phosphate + H(+) = [HPr protein]-L-serine + diphosphate. Catalyzes the ATP- as well as the pyrophosphate-dependent phosphorylation of a specific serine residue in HPr, a phosphocarrier protein of the phosphoenolpyruvate-dependent sugar phosphotransferase system (PTS). HprK/P also catalyzes the pyrophosphate-producing, inorganic phosphate-dependent dephosphorylation (phosphorolysis) of seryl-phosphorylated HPr (P-Ser-HPr). The sequence is that of HPr kinase/phosphorylase from Aromatoleum aromaticum (strain DSM 19018 / LMG 30748 / EbN1) (Azoarcus sp. (strain EbN1)).